Consider the following 351-residue polypeptide: Methionine import ATP-binding protein MetN (351 aa).

The region spanning 4–249 (VQLDHVSVTF…PKAELTQKFV (246 aa)) is the ABC transporter domain. 41–48 (GFSGAGKS) contacts ATP.

It belongs to the ABC transporter superfamily. Methionine importer (TC 3.A.1.24) family. The complex is composed of two ATP-binding proteins (MetN), two transmembrane proteins (MetI) and a solute-binding protein (MetQ).

The protein localises to the cell membrane. The enzyme catalyses L-methionine(out) + ATP + H2O = L-methionine(in) + ADP + phosphate + H(+). It catalyses the reaction D-methionine(out) + ATP + H2O = D-methionine(in) + ADP + phosphate + H(+). Part of the ABC transporter complex MetNIQ involved in methionine import. Responsible for energy coupling to the transport system. This Lactobacillus delbrueckii subsp. bulgaricus (strain ATCC 11842 / DSM 20081 / BCRC 10696 / JCM 1002 / NBRC 13953 / NCIMB 11778 / NCTC 12712 / WDCM 00102 / Lb 14) protein is Methionine import ATP-binding protein MetN.